The sequence spans 124 residues: MGKARGDEAYFQRSSLFWVTIIILSFGYYTWVIFWPESIPYQSLGPLGPFTQYLLKHHHTLVHAWYWLAWMIHVGESLYAIVLCKSKGITNTWTQLLWFLQTFLFGLASLYYLIAFRPKHQKQT.

The next 3 helical transmembrane spans lie at 16–36 (LFWVTIIILSFGYYTWVIFWP), 62–82 (VHAWYWLAWMIHVGESLYAIV), and 96–116 (LLWFLQTFLFGLASLYYLIAF).

The protein localises to the membrane. This is Transmembrane protein 254 (TMEM254) from Bos taurus (Bovine).